The following is a 361-amino-acid chain: Sensor protein VanSC (361 aa).

Transmembrane regions (helical) follow at residues 16–36 (FVTT…IRFI) and 59–79 (WLFC…IYYM). The Histidine kinase domain occupies 144-359 (YLAHDLRTPL…IFNVRLPKPA (216 aa)). Phosphohistidine; by autocatalysis is present on histidine 147. Glutamate 252 is a binding site for Mg(2+).

In terms of processing, autophosphorylated.

Its subcellular location is the membrane. The enzyme catalyses ATP + protein L-histidine = ADP + protein N-phospho-L-histidine.. The protein is Sensor protein VanSC of Enterococcus gallinarum.